The sequence spans 485 residues: Iroquois-class homeodomain protein IRX-4 (485 aa).

The homeobox; TALE-type DNA-binding region spans 142 to 203 (GTRRKNATRE…NARRRLKKEN (62 aa)). The segment at 206 to 313 (TWPPRNKCSD…EEEEAAERAR (108 aa)) is disordered. Residues 221 to 232 (EEEEEEEEECSQ) are compositionally biased toward acidic residues. The segment covering 234–253 (DAMKSEKAEEPTGKEEKELE) has biased composition (basic and acidic residues). Over residues 254 to 269 (LSDLEDLDAAESESSE) the composition is skewed to acidic residues. The span at 282–294 (HPLPGGGPPPRAA) shows a compositional bias: pro residues.

It belongs to the TALE/IRO homeobox family. Ventricles of the heart, developing feather buds, retina, hindbrain.

The protein localises to the nucleus. Its function is as follows. Regulates the chamber-specific expression of myosin isoforms by activating the expression of the ventricle myosin heavy chain-1 (Vmhc1) and suppressing the expression of the atrial myosin heavy chain-1 (Amhc1) in the ventricles. May play a critical role in establishing chamber-specific gene expression in the developing heart. The chain is Iroquois-class homeodomain protein IRX-4 (IRX4) from Gallus gallus (Chicken).